The following is a 256-amino-acid chain: Enolase-phosphatase E1 (256 aa).

Mg(2+) contacts are provided by aspartate 14 and glutamate 16. Substrate-binding positions include 142–143 (SS) and lysine 176. Aspartate 201 lines the Mg(2+) pocket.

This sequence belongs to the HAD-like hydrolase superfamily. MasA/MtnC family. Monomer. It depends on Mg(2+) as a cofactor.

The protein localises to the cytoplasm. Its subcellular location is the nucleus. It catalyses the reaction 5-methylsulfanyl-2,3-dioxopentyl phosphate + H2O = 1,2-dihydroxy-5-(methylsulfanyl)pent-1-en-3-one + phosphate. It participates in amino-acid biosynthesis; L-methionine biosynthesis via salvage pathway; L-methionine from S-methyl-5-thio-alpha-D-ribose 1-phosphate: step 3/6. The protein operates within amino-acid biosynthesis; L-methionine biosynthesis via salvage pathway; L-methionine from S-methyl-5-thio-alpha-D-ribose 1-phosphate: step 4/6. Functionally, bifunctional enzyme that catalyzes the enolization of 2,3-diketo-5-methylthiopentyl-1-phosphate (DK-MTP-1-P) into the intermediate 2-hydroxy-3-keto-5-methylthiopentenyl-1-phosphate (HK-MTPenyl-1-P), which is then dephosphorylated to form the acireductone 1,2-dihydroxy-3-keto-5-methylthiopentene (DHK-MTPene). This chain is Enolase-phosphatase E1, found in Drosophila erecta (Fruit fly).